The primary structure comprises 474 residues: Hydrogenobyrinate a,c-diamide synthase (474 aa).

The 191-residue stretch at valine 269–glutamine 459 folds into the GATase cobBQ-type domain. Cysteine 352 functions as the Nucleophile in the catalytic mechanism.

This sequence belongs to the CobB/CbiA family. The cofactor is Mg(2+).

It carries out the reaction hydrogenobyrinate + 2 L-glutamine + 2 ATP + 2 H2O = hydrogenobyrinate a,c-diamide + 2 L-glutamate + 2 ADP + 2 phosphate + 2 H(+). It participates in cofactor biosynthesis; adenosylcobalamin biosynthesis; cob(II)yrinate a,c-diamide from precorrin-2 (aerobic route): step 9/10. Catalyzes the ATP-dependent amidation of the two carboxylate groups at positions a and c of hydrogenobyrinate, using either L-glutamine or ammonia as the nitrogen source. This chain is Hydrogenobyrinate a,c-diamide synthase, found in Thermobifida fusca (strain YX).